We begin with the raw amino-acid sequence, 549 residues long: Glucose-6-phosphate isomerase (549 aa).

Glu-355 serves as the catalytic Proton donor. Active-site residues include His-386 and Lys-514.

This sequence belongs to the GPI family.

The protein resides in the cytoplasm. It carries out the reaction alpha-D-glucose 6-phosphate = beta-D-fructose 6-phosphate. It participates in carbohydrate biosynthesis; gluconeogenesis. The protein operates within carbohydrate degradation; glycolysis; D-glyceraldehyde 3-phosphate and glycerone phosphate from D-glucose: step 2/4. Functionally, catalyzes the reversible isomerization of glucose-6-phosphate to fructose-6-phosphate. The protein is Glucose-6-phosphate isomerase of Desulfatibacillum aliphaticivorans.